The following is a 182-amino-acid chain: UPF0316 protein BCB4264_A3368 (182 aa).

Helical transmembrane passes span 6–26, 32–52, and 58–78; these read LIFVLQIIYVPILTIRTILLV, SAAGVGLLEGAIYIVSLGIVF, and WMNIVAYVIGFSAGLLLGGYI.

Belongs to the UPF0316 family.

It localises to the cell membrane. The sequence is that of UPF0316 protein BCB4264_A3368 from Bacillus cereus (strain B4264).